A 191-amino-acid polypeptide reads, in one-letter code: Ribonuclease HII (191 aa).

Residues 16 to 191 (INLIGIDEAG…KLHRKSFKLL (176 aa)) form the RNase H type-2 domain. Asp22, Glu23, and Asp110 together coordinate a divalent metal cation.

Belongs to the RNase HII family. Mn(2+) is required as a cofactor. It depends on Mg(2+) as a cofactor.

It localises to the cytoplasm. The catalysed reaction is Endonucleolytic cleavage to 5'-phosphomonoester.. In terms of biological role, endonuclease that specifically degrades the RNA of RNA-DNA hybrids. This Campylobacter jejuni subsp. doylei (strain ATCC BAA-1458 / RM4099 / 269.97) protein is Ribonuclease HII.